A 103-amino-acid chain; its full sequence is Large ribosomal subunit protein uL24 (103 aa).

This sequence belongs to the universal ribosomal protein uL24 family. As to quaternary structure, part of the 50S ribosomal subunit.

Functionally, one of two assembly initiator proteins, it binds directly to the 5'-end of the 23S rRNA, where it nucleates assembly of the 50S subunit. One of the proteins that surrounds the polypeptide exit tunnel on the outside of the subunit. The protein is Large ribosomal subunit protein uL24 of Haemophilus influenzae (strain ATCC 51907 / DSM 11121 / KW20 / Rd).